A 145-amino-acid chain; its full sequence is uncharacterized protein (145 aa).

This is an uncharacterized protein from Bacillus subtilis (strain 168).